Consider the following 552-residue polypeptide: 2,3-bisphosphoglycerate-independent phosphoglycerate mutase (552 aa).

Residues M1–D25 show a composition bias toward polar residues. Residues M1–V30 form a disordered region. 2 residues coordinate Mn(2+): D38 and S88. The active-site Phosphoserine intermediate is the S88. Residues H149, R179–D180, R217, R223, R293–R296, and K373 contribute to the substrate site. D440, H444, D481, H482, and H500 together coordinate Mn(2+).

It belongs to the BPG-independent phosphoglycerate mutase family. In terms of assembly, monomer. Requires Mn(2+) as cofactor.

It carries out the reaction (2R)-2-phosphoglycerate = (2R)-3-phosphoglycerate. It functions in the pathway carbohydrate degradation; glycolysis; pyruvate from D-glyceraldehyde 3-phosphate: step 3/5. In terms of biological role, catalyzes the interconversion of 2-phosphoglycerate and 3-phosphoglycerate. In Psychrobacter arcticus (strain DSM 17307 / VKM B-2377 / 273-4), this protein is 2,3-bisphosphoglycerate-independent phosphoglycerate mutase.